A 301-amino-acid chain; its full sequence is tRNA dimethylallyltransferase (301 aa).

Gly8–Thr15 is a binding site for ATP. Position 10-15 (Thr10–Thr15) interacts with substrate. The tract at residues Asp33 to Gln36 is interaction with substrate tRNA.

Belongs to the IPP transferase family. As to quaternary structure, monomer. It depends on Mg(2+) as a cofactor.

The enzyme catalyses adenosine(37) in tRNA + dimethylallyl diphosphate = N(6)-dimethylallyladenosine(37) in tRNA + diphosphate. Functionally, catalyzes the transfer of a dimethylallyl group onto the adenine at position 37 in tRNAs that read codons beginning with uridine, leading to the formation of N6-(dimethylallyl)adenosine (i(6)A). The polypeptide is tRNA dimethylallyltransferase (Thermosipho melanesiensis (strain DSM 12029 / CIP 104789 / BI429)).